We begin with the raw amino-acid sequence, 337 residues long: RNA 3'-terminal phosphate cyclase (337 aa).

ATP is bound by residues Q101 and 282 to 285 (HMSD). H306 serves as the catalytic Tele-AMP-histidine intermediate.

This sequence belongs to the RNA 3'-terminal cyclase family. Type 1 subfamily.

Its subcellular location is the cytoplasm. The catalysed reaction is a 3'-end 3'-phospho-ribonucleotide-RNA + ATP = a 3'-end 2',3'-cyclophospho-ribonucleotide-RNA + AMP + diphosphate. In terms of biological role, catalyzes the conversion of 3'-phosphate to a 2',3'-cyclic phosphodiester at the end of RNA. The mechanism of action of the enzyme occurs in 3 steps: (A) adenylation of the enzyme by ATP; (B) transfer of adenylate to an RNA-N3'P to produce RNA-N3'PP5'A; (C) and attack of the adjacent 2'-hydroxyl on the 3'-phosphorus in the diester linkage to produce the cyclic end product. The biological role of this enzyme is unknown but it is likely to function in some aspects of cellular RNA processing. The protein is RNA 3'-terminal phosphate cyclase of Saccharolobus islandicus (strain M.16.27) (Sulfolobus islandicus).